The following is an 87-amino-acid chain: uncharacterized protein (87 aa).

A run of 2 helical transmembrane segments spans residues isoleucine 8 to leucine 28 and leucine 47 to leucine 67.

It localises to the cell membrane. This is an uncharacterized protein from Bacillus subtilis (strain 168).